The chain runs to 725 residues: ABC transporter G family member 7 (725 aa).

The helical transmembrane segment at 12–34 threads the bilayer; sequence VVSGIGGNGVGGALAAVAAALLV. An ABC transporter domain is found at 70 to 316; that stretch reads IRWRNITCSL…YFGNFGFLCP (247 aa). ATP is bound at residue 108-115; sequence GPSGSGKT. Positions 392-603 constitute an ABC transmembrane type-2 domain; it reads RQFFLLLKRA…AFQGLCINEF (212 aa). The next 4 helical transmembrane spans lie at 446 to 466, 493 to 513, 528 to 548, and 553 to 573; these read LLQV…VGVF, IAEI…LYPM, GIVT…GAMV, and AAMA…GYYV. Positions 676–725 are disordered; the sequence is NSGVQLDKAEVDQTEKPEDDDINQPLDDQNQTSDSDDELDEIRPFVLEGL. The span at 682–691 shows a compositional bias: basic and acidic residues; it reads DKAEVDQTEK.

The protein belongs to the ABC transporter superfamily. ABCG family. Eye pigment precursor importer (TC 3.A.1.204) subfamily.

Its subcellular location is the membrane. This is ABC transporter G family member 7 (ABCG7) from Arabidopsis thaliana (Mouse-ear cress).